The following is a 253-amino-acid chain: Tetraspanin-3 (253 aa).

Residues 1 to 11 (MGQCGITSSKT) lie on the Cytoplasmic side of the membrane. The helical transmembrane segment at 12-32 (VLVFLNLIFWGAAGILCYVGA) threads the bilayer. Topologically, residues 33–50 (YVFITYDDYDHFFEDVYT) are extracellular. Residues 51-71 (LFPAVVIIAVGALLFIIGLIG) form a helical membrane-spanning segment. Topologically, residues 72–85 (CCATIRESRCGLAT) are cytoplasmic. The chain crosses the membrane as a helical span at residues 86–106 (FVFILLLVFVTEVVVVVLGYV). Topologically, residues 107–212 (YRAKVENEVD…KKLQEILMHV (106 aa)) are extracellular. Residues Asn-127, Asn-152, Asn-167, and Asn-183 are each glycosylated (N-linked (GlcNAc...) asparagine). The helical transmembrane segment at 213–233 (IWAALAFAAIQLLGMLCACIV) threads the bilayer. Topologically, residues 234-253 (LCRRSRDPAYELLITGGTYA) are cytoplasmic.

Belongs to the tetraspanin (TM4SF) family. In terms of assembly, interacts with claudin-11/CLDN11 and integrins.

The protein localises to the membrane. Functionally, regulates the proliferation and migration of oligodendrocytes, a process essential for normal myelination and repair. This chain is Tetraspanin-3 (Tspan3), found in Mus musculus (Mouse).